Here is a 511-residue protein sequence, read N- to C-terminus: 2-isopropylmalate synthase (511 aa).

The Pyruvate carboxyltransferase domain occupies 6 to 269; that stretch reads IIIFDTTLRD…YTDIKCENIF (264 aa). 4 residues coordinate Mn(2+): D15, H203, H205, and N239. Residues 394-511 form a regulatory domain region; sequence VIEKLSVISG…SLKVEERKMA (118 aa).

Belongs to the alpha-IPM synthase/homocitrate synthase family. LeuA type 1 subfamily. In terms of assembly, homodimer. The cofactor is Mn(2+).

It localises to the cytoplasm. It carries out the reaction 3-methyl-2-oxobutanoate + acetyl-CoA + H2O = (2S)-2-isopropylmalate + CoA + H(+). Its pathway is amino-acid biosynthesis; L-leucine biosynthesis; L-leucine from 3-methyl-2-oxobutanoate: step 1/4. Functionally, catalyzes the condensation of the acetyl group of acetyl-CoA with 3-methyl-2-oxobutanoate (2-ketoisovalerate) to form 3-carboxy-3-hydroxy-4-methylpentanoate (2-isopropylmalate). In Campylobacter jejuni subsp. jejuni serotype O:23/36 (strain 81-176), this protein is 2-isopropylmalate synthase.